A 716-amino-acid polypeptide reads, in one-letter code: Fatty acid oxidation complex subunit alpha (716 aa).

An enoyl-CoA hydratase/isomerase region spans residues 1–189 (MIYQSPTIQV…KVGAVDAVVA (189 aa)). Residue Asp296 participates in substrate binding. A 3-hydroxyacyl-CoA dehydrogenase region spans residues 311–716 (KEVNNAAVLG…AANNGSYYQA (406 aa)). Residues Met324, Asp343, 400–402 (VVE), Lys407, and Ser429 each bind NAD(+). The For 3-hydroxyacyl-CoA dehydrogenase activity role is filled by His450. An NAD(+)-binding site is contributed by Asn453. Residues Asn500 and Tyr660 each coordinate substrate.

This sequence in the N-terminal section; belongs to the enoyl-CoA hydratase/isomerase family. In the C-terminal section; belongs to the 3-hydroxyacyl-CoA dehydrogenase family. In terms of assembly, heterotetramer of two alpha chains (FadB) and two beta chains (FadA).

It catalyses the reaction a (3S)-3-hydroxyacyl-CoA + NAD(+) = a 3-oxoacyl-CoA + NADH + H(+). The enzyme catalyses a (3S)-3-hydroxyacyl-CoA = a (2E)-enoyl-CoA + H2O. It carries out the reaction a 4-saturated-(3S)-3-hydroxyacyl-CoA = a (3E)-enoyl-CoA + H2O. The catalysed reaction is (3S)-3-hydroxybutanoyl-CoA = (3R)-3-hydroxybutanoyl-CoA. It catalyses the reaction a (3Z)-enoyl-CoA = a 4-saturated (2E)-enoyl-CoA. The enzyme catalyses a (3E)-enoyl-CoA = a 4-saturated (2E)-enoyl-CoA. Its pathway is lipid metabolism; fatty acid beta-oxidation. Functionally, involved in the aerobic and anaerobic degradation of long-chain fatty acids via beta-oxidation cycle. Catalyzes the formation of 3-oxoacyl-CoA from enoyl-CoA via L-3-hydroxyacyl-CoA. It can also use D-3-hydroxyacyl-CoA and cis-3-enoyl-CoA as substrate. The chain is Fatty acid oxidation complex subunit alpha from Shewanella baltica (strain OS195).